Reading from the N-terminus, the 844-residue chain is Probable inorganic carbon transporter subunit DabA 1 (844 aa).

4 residues coordinate Zn(2+): C359, D361, H543, and C558.

Belongs to the inorganic carbon transporter (TC 9.A.2) DabA family. Forms a complex with DabB. Requires Zn(2+) as cofactor.

The protein localises to the cell inner membrane. Functionally, part of an energy-coupled inorganic carbon pump. The polypeptide is Probable inorganic carbon transporter subunit DabA 1 (Bradyrhizobium sp. (strain BTAi1 / ATCC BAA-1182)).